A 172-amino-acid chain; its full sequence is Adenine phosphoribosyltransferase (172 aa).

The protein belongs to the purine/pyrimidine phosphoribosyltransferase family. As to quaternary structure, homodimer.

It localises to the cytoplasm. It carries out the reaction AMP + diphosphate = 5-phospho-alpha-D-ribose 1-diphosphate + adenine. Its pathway is purine metabolism; AMP biosynthesis via salvage pathway; AMP from adenine: step 1/1. Its function is as follows. Catalyzes a salvage reaction resulting in the formation of AMP, that is energically less costly than de novo synthesis. The chain is Adenine phosphoribosyltransferase from Ligilactobacillus salivarius (strain UCC118) (Lactobacillus salivarius).